The primary structure comprises 720 residues: MPNLKIAYSPKVEQYFSTNRELVEIAKTDFTDVAAIVLSSSDVGEYLDRIKATKFDVPVFIVQTDEQQVDPKFYDSIYHIQDLNGYDIKLYSRQIETAAKLYEEKMLPPFFKMLSEYVEMGNIAFDCPGHQGGQYYRKHPAGRFLYDFYGENIFRSDICNADVKLGDLLIHEGAACDAQKYAAQVFNADKTYFVLNGTSSSNKVALNAVLAPGDLVLFDRNNHKSNHHGALIQAGATPIYLETARNPFGFIGGIDSHCFEEDYLKSLIKEVAPEKLNQKRPFRLAVIQLGTYDGTIYNARQVVDKIGHLCDYILFDSAWVGYEQFIPMMKDCSPLLLELNENDPGILVTQSVHKQQAGFSQTSQIHKKDKHIKGQDRYVNHKRFNNAFMLHASTSPFYPLFATLDVNAKIQGSEAGRRLWHECVKVGIEARKLVLNHCELIRPFIPTTIKGKKWQDYDTEEIATNLEFFKFHPTDTWHKFEGYADEQYFVDPCKFLLTTPGISLETGEYEEFGVPATILANYLRENGIIPEKCDLNSILFLLTPAETITKMQTLVAQIALFEKHIKQDSLLKYVLPTVYKNNEDRYKGYTIRQLCQEMHDLYVSRNVKQLQKDLFRKATLPEYVLNPHDANIELIRNKVELVPLTDIVGRVAAEGALPYPPGVLCVVPGEKWSTTAHQYFLALEEGINTLPGFAPEIQGVYLQKDPDGRTRAYGYVLTDY.

Lys354 is modified (N6-(pyridoxal phosphate)lysine).

It belongs to the Orn/Lys/Arg decarboxylase class-I family. Pyridoxal 5'-phosphate serves as cofactor.

The catalysed reaction is L-ornithine + H(+) = putrescine + CO2. This Haemophilus influenzae (strain ATCC 51907 / DSM 11121 / KW20 / Rd) protein is Ornithine decarboxylase (speF).